Consider the following 352-residue polypeptide: Fe(3+) ions import ATP-binding protein FbpC (352 aa).

The 235-residue stretch at 5 to 239 (LHIGHLSKSF…PADLDAVLFI (235 aa)) folds into the ABC transporter domain. Residue 37–44 (GASGCGKT) participates in ATP binding.

The protein belongs to the ABC transporter superfamily. Fe(3+) ion importer (TC 3.A.1.10) family. As to quaternary structure, the complex is composed of two ATP-binding proteins (FbpC), two transmembrane proteins (FbpB) and a solute-binding protein (FbpA).

It is found in the cell inner membrane. It catalyses the reaction Fe(3+)(out) + ATP + H2O = Fe(3+)(in) + ADP + phosphate + H(+). Its function is as follows. Part of the ABC transporter complex FbpABC involved in Fe(3+) ions import. Responsible for energy coupling to the transport system. This chain is Fe(3+) ions import ATP-binding protein FbpC, found in Neisseria gonorrhoeae.